A 507-amino-acid chain; its full sequence is Cytochrome P450 4A14 (507 aa).

Positions 1-4 (MGFS) are cleaved as a propeptide — removed in mature form. E318 contacts heme. S437 bears the Phosphoserine mark. Residue C454 coordinates heme.

It belongs to the cytochrome P450 family. Heme serves as cofactor.

Its subcellular location is the endoplasmic reticulum membrane. It is found in the microsome membrane. The enzyme catalyses an omega-methyl-long-chain fatty acid + reduced [NADPH--hemoprotein reductase] + O2 = an omega-hydroxy-long-chain fatty acid + oxidized [NADPH--hemoprotein reductase] + H2O + H(+). The catalysed reaction is dodecanoate + reduced [NADPH--hemoprotein reductase] + O2 = (11R)-hydroxydodecanoate + oxidized [NADPH--hemoprotein reductase] + H2O + H(+). It catalyses the reaction dodecanoate + reduced [NADPH--hemoprotein reductase] + O2 = 12-hydroxydodecanoate + oxidized [NADPH--hemoprotein reductase] + H2O + H(+). It carries out the reaction tetradecanoate + reduced [NADPH--hemoprotein reductase] + O2 = 14-hydroxytetradecanoate + oxidized [NADPH--hemoprotein reductase] + H2O + H(+). It functions in the pathway lipid metabolism; fatty acid metabolism. A cytochrome P450 monooxygenase that catalyzes omega and omega-1 hydroxylation of saturated fatty acids. Exhibits preferential omega versus omega-1 regioselectivity and (R) versus (S) stereoselectivity for hydroxylation of dodecanoic (lauric) acid. Mechanistically, uses molecular oxygen inserting one oxygen atom into a substrate, and reducing the second into a water molecule, with two electrons provided by NADPH via cytochrome P450 reductase (CPR; NADPH-ferrihemoprotein reductase). The protein is Cytochrome P450 4A14 of Rattus norvegicus (Rat).